We begin with the raw amino-acid sequence, 171 residues long: Dual specificity protein phosphatase OPG106 (171 aa).

Residues 1–27 (MDKKSLYKYLLLRSTGDMHKAKSPTIM) are dimerization. The Tyrosine-protein phosphatase domain occupies 23-171 (SPTIMTRVTN…IIEKYVIDKN (149 aa)). C110 serves as the catalytic Phosphocysteine intermediate.

The protein belongs to the protein-tyrosine phosphatase family. Non-receptor class dual specificity subfamily. As to quaternary structure, homodimer.

It is found in the virion. The protein localises to the host cytoplasm. The catalysed reaction is O-phospho-L-tyrosyl-[protein] + H2O = L-tyrosyl-[protein] + phosphate. It catalyses the reaction O-phospho-L-seryl-[protein] + H2O = L-seryl-[protein] + phosphate. In terms of biological role, serine/tyrosine phosphatase which down-regulates cellular antiviral response by dephosphorylating activated host STAT1 and blocking interferon (IFN)-stimulated innate immune responses. Dephosphorylates the OPG144 protein. The chain is Dual specificity protein phosphatase OPG106 (OPG106) from Bos taurus (Bovine).